The primary structure comprises 215 residues: Outer-membrane lipoprotein LolB (215 aa).

The N-terminal stretch at 1-21 (MLIPKKYYLLIILLSNCLLAS) is a signal peptide. A lipid anchor (N-palmitoyl cysteine) is attached at Cys22. Cys22 carries S-diacylglycerol cysteine lipidation.

Belongs to the LolB family. In terms of assembly, monomer.

The protein localises to the cell outer membrane. Plays a critical role in the incorporation of lipoproteins in the outer membrane after they are released by the LolA protein. The sequence is that of Outer-membrane lipoprotein LolB from Baumannia cicadellinicola subsp. Homalodisca coagulata.